The chain runs to 195 residues: Molybdenum cofactor guanylyltransferase (195 aa).

GTP-binding positions include 10-12, Lys23, Asn51, Asp69, and Asp99; that span reads LAG. Residue Asp99 coordinates Mg(2+).

This sequence belongs to the MobA family. Monomer. Mg(2+) is required as a cofactor.

It localises to the cytoplasm. The enzyme catalyses Mo-molybdopterin + GTP + H(+) = Mo-molybdopterin guanine dinucleotide + diphosphate. Transfers a GMP moiety from GTP to Mo-molybdopterin (Mo-MPT) cofactor (Moco or molybdenum cofactor) to form Mo-molybdopterin guanine dinucleotide (Mo-MGD) cofactor. The sequence is that of Molybdenum cofactor guanylyltransferase from Yersinia pseudotuberculosis serotype O:1b (strain IP 31758).